We begin with the raw amino-acid sequence, 91 residues long: Small ribosomal subunit protein uS19 (91 aa).

It belongs to the universal ribosomal protein uS19 family.

In terms of biological role, protein S19 forms a complex with S13 that binds strongly to the 16S ribosomal RNA. This Synechococcus sp. (strain RCC307) protein is Small ribosomal subunit protein uS19.